A 400-amino-acid chain; its full sequence is MGAPLSTTRRGMGQNLSVPNPLGFFPDHQLDPLFRANSSSPDWDFNKNKDNWPMANKVGVGGYGPGFTPPHGGLLGWSPQAQGVLTTLPADPPPASTNRRSGRKPTPVSPPLRDTHPQAMQWNSTQFHQALLDPRVRALYFPAGGSSSETQNPAPTIASLTSSIFLKTGGPATNMDNITSGLLGPLLVLQAVCFLLTKILTIPQSLDSWWTSLNFLGGTPGCPGQNSQSPTSNHLPTSCPPTCPGYRWMCLRRFIIFLFILLLCLIFLLVLVDYQGMLPVCPPLPGSTTTSTGPCKTCTTLAQGTSMFPSCCCSKPSDGNCTCIPIPSSWALGKYLWEWASARFSWLSLLVQFVQWCVGLSPTVWLLVIWMIWYWGPNLCSILSPFIPLLPIFCYLWVSI.

Met-1 is modified (N-acetylmethionine). Residue Gly-2 is the site of N-myristoyl glycine; by host attachment. Positions 2-119 (GAPLSTTRRG…PPLRDTHPQA (118 aa)) are pre-S1. The tract at residues 2 to 174 (GAPLSTTRRG…FLKTGGPATN (173 aa)) is pre-S. Over 2–181 (GAPLSTTRRG…ATNMDNITSG (180 aa)) the chain is Virion surface; in external conformation. At 2-253 (GAPLSTTRRG…PGYRWMCLRR (252 aa)) the chain is on the intravirion; in internal conformation side. Pro-4 carries N-linked (GlcNAc...) asparagine glycosylation. The disordered stretch occupies residues 84-114 (VLTTLPADPPPASTNRRSGRKPTPVSPPLRD). The segment at 120–174 (MQWNSTQFHQALLDPRVRALYFPAGGSSSETQNPAPTIASLTSSIFLKTGGPATN) is pre-S2. A helical transmembrane segment spans residues 182-202 (LLGPLLVLQAVCFLLTKILTI). Over 203-253 (PQSLDSWWTSLNFLGGTPGCPGQNSQSPTSNHLPTSCPPTCPGYRWMCLRR) the chain is Intravirion; in external conformation. The chain crosses the membrane as a helical span at residues 254-274 (FIIFLFILLLCLIFLLVLVDY). The Virion surface portion of the chain corresponds to 275-348 (QGMLPVCPPL…WASARFSWLS (74 aa)). A glycan (N-linked (GlcNAc...) asparagine; by host) is linked at Asn-320. A helical membrane pass occupies residues 349 to 369 (LLVQFVQWCVGLSPTVWLLVI). Residues 370–375 (WMIWYW) are Intravirion-facing. The helical transmembrane segment at 376–398 (GPNLCSILSPFIPLLPIFCYLWV) threads the bilayer. At 399 to 400 (SI) the chain is on the virion surface side.

Belongs to the orthohepadnavirus major surface antigen family. As to quaternary structure, in its internal form (Li-HBsAg), interacts with the capsid protein and with the isoform S. Interacts with host chaperone CANX. Associates with host chaperone CANX through its pre-S2 N glycan; this association may be essential for isoform M proper secretion. In terms of assembly, interacts with isoform L. Interacts with the antigens of satellite virus HDV (HDVAgs); this interaction is required for encapsidation of HDV genomic RNA. Post-translationally, isoform M is N-terminally acetylated by host at a ratio of 90%, and N-glycosylated by host at the pre-S2 region. Myristoylated.

It localises to the virion membrane. Its function is as follows. The large envelope protein exists in two topological conformations, one which is termed 'external' or Le-HBsAg and the other 'internal' or Li-HBsAg. In its external conformation the protein attaches the virus to cell receptors and thereby initiating infection. This interaction determines the species specificity and liver tropism. This attachment induces virion internalization predominantly through caveolin-mediated endocytosis. The large envelope protein also assures fusion between virion membrane and endosomal membrane. In its internal conformation the protein plays a role in virion morphogenesis and mediates the contact with the nucleocapsid like a matrix protein. Functionally, the middle envelope protein plays an important role in the budding of the virion. It is involved in the induction of budding in a nucleocapsid independent way. In this process the majority of envelope proteins bud to form subviral lipoprotein particles of 22 nm of diameter that do not contain a nucleocapsid. The chain is Large envelope protein from Homo sapiens (Human).